Here is a 379-residue protein sequence, read N- to C-terminus: ATPase ASNA1 homolog (379 aa).

The disordered stretch occupies residues 1–20; it reads MSEDESNSVSCSLSLESDGY. Residues 7 to 18 show a composition bias toward low complexity; that stretch reads NSVSCSLSLESD. 46–53 is a binding site for ATP; the sequence is KGGVGKTT. The active site involves Asp75. Glu246 and Asn273 together coordinate ATP.

This sequence belongs to the arsA ATPase family. In terms of assembly, homodimer.

Its subcellular location is the cytoplasm. The protein resides in the endoplasmic reticulum. ATPase required for the post-translational delivery of tail-anchored (TA) proteins to the endoplasmic reticulum. Recognizes and selectively binds the transmembrane domain of TA proteins in the cytosol. This complex then targets to the endoplasmic reticulum by membrane-bound receptors, where the tail-anchored protein is released for insertion. This process is regulated by ATP binding and hydrolysis. ATP binding drives the homodimer towards the closed dimer state, facilitating recognition of newly synthesized TA membrane proteins. ATP hydrolysis is required for insertion. Subsequently, the homodimer reverts towards the open dimer state, lowering its affinity for the membrane-bound receptor, and returning it to the cytosol to initiate a new round of targeting. This Plasmodium falciparum (isolate 3D7) protein is ATPase ASNA1 homolog.